Reading from the N-terminus, the 187-residue chain is UPF0301 protein GOX1459 (187 aa).

This sequence belongs to the UPF0301 (AlgH) family.

This Gluconobacter oxydans (strain 621H) (Gluconobacter suboxydans) protein is UPF0301 protein GOX1459.